The sequence spans 580 residues: NADH-quinone oxidoreductase subunit C/D (580 aa).

An NADH dehydrogenase I subunit C region spans residues 1-171 (MSFDQVIADA…PPFVLTDRLF (171 aa)). Residues 195–580 (ELMVLNFGPH…IDFVMSDVDR (386 aa)) are NADH dehydrogenase I subunit D.

In the N-terminal section; belongs to the complex I 30 kDa subunit family. The protein in the C-terminal section; belongs to the complex I 49 kDa subunit family. NDH-1 is composed of 13 different subunits. Subunits NuoB, CD, E, F, and G constitute the peripheral sector of the complex.

It localises to the cell inner membrane. It carries out the reaction a quinone + NADH + 5 H(+)(in) = a quinol + NAD(+) + 4 H(+)(out). In terms of biological role, NDH-1 shuttles electrons from NADH, via FMN and iron-sulfur (Fe-S) centers, to quinones in the respiratory chain. The immediate electron acceptor for the enzyme in this species is believed to be ubiquinone. Couples the redox reaction to proton translocation (for every two electrons transferred, four hydrogen ions are translocated across the cytoplasmic membrane), and thus conserves the redox energy in a proton gradient. This chain is NADH-quinone oxidoreductase subunit C/D, found in Cereibacter sphaeroides (strain ATCC 17025 / ATH 2.4.3) (Rhodobacter sphaeroides).